Reading from the N-terminus, the 311-residue chain is tRNA-cytidine(32) 2-sulfurtransferase (311 aa).

The short motif at 45-50 (SGGKDS) is the PP-loop motif element. Residues C120, C123, and C211 each contribute to the [4Fe-4S] cluster site.

It belongs to the TtcA family. As to quaternary structure, homodimer. Mg(2+) serves as cofactor. Requires [4Fe-4S] cluster as cofactor.

It is found in the cytoplasm. The catalysed reaction is cytidine(32) in tRNA + S-sulfanyl-L-cysteinyl-[cysteine desulfurase] + AH2 + ATP = 2-thiocytidine(32) in tRNA + L-cysteinyl-[cysteine desulfurase] + A + AMP + diphosphate + H(+). It functions in the pathway tRNA modification. Its function is as follows. Catalyzes the ATP-dependent 2-thiolation of cytidine in position 32 of tRNA, to form 2-thiocytidine (s(2)C32). The sulfur atoms are provided by the cysteine/cysteine desulfurase (IscS) system. This is tRNA-cytidine(32) 2-sulfurtransferase from Shewanella pealeana (strain ATCC 700345 / ANG-SQ1).